Reading from the N-terminus, the 84-residue chain is MKLSCLLLTLAIIFVLTIVHAPNVKAKALADPESDAVGFADAVGEADPFDITKLNIKKLTKATCKVISKGASMCKVLFDKKKQE.

An N-terminal signal peptide occupies residues 1–21 (MKLSCLLLTLAIIFVLTIVHA). The propeptide occupies 22–48 (PNVKAKALADPESDAVGFADAVGEADP).

This sequence belongs to the formicidae venom precursor-01 superfamily. Ant pilosulin family. Expressed by the venom gland.

The protein localises to the secreted. In terms of biological role, shows activity against E.coli and S.aureus (MIC&lt;6.25 uM), moderate activity against P.aeruginosa (MIC&lt;25 uM), weak activity against B.subtilis (MIC&lt;50 uM), and has no effect against L.garvieae, C.albicans, and S.cerevisiae. Has no hemolytic nor cytolytic activity. Causes an IgE-independent histamine release. The protein is M-myrmeciitoxin-Mb2a of Myrmecia banksi (Jack jumper ant).